The primary structure comprises 419 residues: Transcription termination factor Rho (419 aa).

Residues 48–123 enclose the Rho RNA-BD domain; the sequence is DIFGDGVLEI…LKVNEVNFDK (76 aa). RNA-binding stretches follow at residues 61 to 66, 78 to 80, and 108 to 110; these read GFGFLR, DIY, and ERY. ATP contacts are provided by residues 169 to 174, 181 to 186, and arginine 212; these read GRGQRG and KAGKTM. Positions 284-288 are RNA-binding 2; it reads VLTGG.

Belongs to the Rho family. As to quaternary structure, homohexamer. The homohexamer assembles into an open ring structure.

Its function is as follows. Facilitates transcription termination by a mechanism that involves Rho binding to the nascent RNA, activation of Rho's RNA-dependent ATPase activity, and release of the mRNA from the DNA template. In Escherichia coli O157:H7, this protein is Transcription termination factor Rho.